Consider the following 1428-residue polypeptide: uncharacterized protein (1428 aa).

Disordered stretches follow at residues 1 to 53 (MAKK…AFKV), 249 to 274 (DIKH…KDSK), and 377 to 413 (KNGI…ETRA). Residues 16–33 (ATTSIPSRSASSPANKNQ) show a composition bias toward polar residues. Residues 34 to 51 (VKGEKNNKTQKVEPKNAF) show a composition bias toward basic and acidic residues. The segment covering 256 to 265 (KETQPSNQVD) has biased composition (polar residues). The Helicase ATP-binding domain maps to 641 to 811 (IDAVNNSQLL…FEGSNLITIP (171 aa)). 654-661 (GDTGCGKS) serves as a coordination point for ATP. The short motif at 758-761 (DEVH) is the DEAH box element. The Helicase C-terminal domain occupies 886–1064 (LIVYLLKYIF…EVVLRVKMCQ (179 aa)).

Belongs to the helicase family. SKI2 subfamily.

It localises to the cytoplasm. This is an uncharacterized protein from Schizosaccharomyces pombe (strain 972 / ATCC 24843) (Fission yeast).